The primary structure comprises 562 residues: MDNGVETPQGQKTQPINLPPVRKKLRKHEGLGKGVKRKLFAEDSSPLKKQISACSDMETLSSPVKSECESRSASLDESFGKCKHEIACDCSAIEELLCHESLLDSPMKLSNAHTIFSSNKWKLELEKIIASKQIFLDMSENAELAAYGETLCNLRIFEKISSPFLFDVQSEERSYSVVYVPHNKELCGQFCQPEKTMARVLGVGAYGKVFDLDKVAIKTANEDESVISAFIAGVIRAKSGADLLSHECVINNLLISNSVCMSHKVSLSRTYDIDLHKFEDWDVRNVMNYYSVFCKLADAVRFLNLKCRINHFDISPMNIFLNHKKEIIFDAVLADYSLSEMHPNYNGTCAIAKEYDKNLQLVPISRNKFCDMFNPGFRPLVANAMILVNVCGAFDGENNPLRHCNLDLCAFAQVVLSCVLRMTDKRGCREAQLYYEKRLFALANEACRLNPLKYPFAYRDACCKVLAEHVVLLGLLFYRDVVEIYEKLYDFLDERGEFGSRDLFEATFLNNSKLTRRQPIREGLASLQSSEYGEKLLHDLRELFLINSTADLDKDTSSLFHM.

The span at 1–16 (MDNGVETPQGQKTQPI) shows a compositional bias: polar residues. Residues 1–32 (MDNGVETPQGQKTQPINLPPVRKKLRKHEGLG) are disordered. ATP is bound by residues 201-209 (LGVGAYGKV) and Lys218. The Proton acceptor role is filled by Asp313.

This sequence belongs to the protein kinase superfamily. Tyr protein kinase family. HCMV ganciclovir subfamily.

Functionally, phosphorylates the antiviral nucleoside analog ganciclovir. The sequence is that of Probable ganciclovir kinase (U69) from Homo sapiens (Human).